Reading from the N-terminus, the 254-residue chain is MARGSAAAAIAGVVWVLLLLVGVASGARLPGGSGGNRGREPRGGAAAAAVATETAVFALGSFWRSEAAFGCLPGVIRTSVGYAGGSKARPEYRNLGDHAECVKVEYDPRLIQYKKLLEVFWASHDPREVFGQGPDVGNQYRSIIFTNGSVEARLAGLSKEKEQAKDRRSVITTQIQPIGAFYPAEPEHQKFELKRKPFLLQLIGNLPEEELLTSTLAAKLNAYAAELCSPNTQNRINSKIDEIAKKGWPILRDI.

The first 26 residues, 1–26, serve as a signal peptide directing secretion; that stretch reads MARGSAAAAIAGVVWVLLLLVGVASG.

Belongs to the MsrA Met sulfoxide reductase family.

It catalyses the reaction L-methionyl-[protein] + [thioredoxin]-disulfide + H2O = L-methionyl-(S)-S-oxide-[protein] + [thioredoxin]-dithiol. The catalysed reaction is [thioredoxin]-disulfide + L-methionine + H2O = L-methionine (S)-S-oxide + [thioredoxin]-dithiol. In terms of biological role, catalyzes the reduction of methionine sulfoxide (MetSO) to methionine in proteins. Plays a protective role against oxidative stress by restoring activity to proteins that have been inactivated by methionine oxidation. MSRA family specifically reduces the MetSO S-enantiomer. The protein is Peptide methionine sulfoxide reductase A5 (MSRA5) of Oryza sativa subsp. japonica (Rice).